The primary structure comprises 148 residues: Lipoprotein signal peptidase (148 aa).

2 helical membrane-spanning segments follow: residues 57-77 and 80-100; these read QWIF…YLNT and VHIF…GNLI. Catalysis depends on residues Asp110 and Asp126. The helical transmembrane segment at 124–144 threads the bilayer; it reads IADVFVVVGTVFLCIYVLFFE.

Belongs to the peptidase A8 family.

It localises to the cell membrane. The catalysed reaction is Release of signal peptides from bacterial membrane prolipoproteins. Hydrolyzes -Xaa-Yaa-Zaa-|-(S,diacylglyceryl)Cys-, in which Xaa is hydrophobic (preferably Leu), and Yaa (Ala or Ser) and Zaa (Gly or Ala) have small, neutral side chains.. It participates in protein modification; lipoprotein biosynthesis (signal peptide cleavage). In terms of biological role, this protein specifically catalyzes the removal of signal peptides from prolipoproteins. The polypeptide is Lipoprotein signal peptidase (Clostridioides difficile (strain 630) (Peptoclostridium difficile)).